Here is a 258-residue protein sequence, read N- to C-terminus: Protein CHAPERONE-LIKE PROTEIN OF POR1, chloroplastic (258 aa).

A chloroplast-targeting transit peptide spans 1–48 (MSSSLLLSGSTVSSSFIAPSKPSLVRNSSKTSLLPFRNVSRSFKTVKC). An N-acetylthreonine modification is found at Thr49. Positions 67–122 (WDPYKRLGVSPYASEEEIWASRNFLLQQYAGHERSEESIEGAFEKLLMSSFIRRKK) are J-like domain required for holdase chaperone activity. 3 consecutive transmembrane segments (helical) span residues 162-182 (FLFA…GPAF), 207-227 (LIGI…IPMI), and 237-257 (TLEL…CTFL).

It belongs to the chaperone-like protein of POR1 protein family. Interacts with PORB in chloroplast. Interacts with PORA during plastid import. In terms of tissue distribution, expressed ubiquitously with higher levels in young leaves, flowers, and the root elongation zone.

Its subcellular location is the mitochondrion membrane. The protein resides in the plastid. The protein localises to the chloroplast envelope. It is found in the chloroplast thylakoid membrane. Essential protein required during embryogenesis. Exhibits holdase chaperone activity involved in the stabilization of NADPH:protochlorophyllide oxidoreductase (POR) proteins against photooxidative stress during POR proteins import into chloroplasts. Required for chloroplast biogenesis and development. When expressed in yeast, triggers mitochondria-mediated cell death associated with the loss of mitochondrial membrane potential. The protein is Protein CHAPERONE-LIKE PROTEIN OF POR1, chloroplastic of Arabidopsis thaliana (Mouse-ear cress).